We begin with the raw amino-acid sequence, 337 residues long: 4-hydroxythreonine-4-phosphate dehydrogenase (337 aa).

Residues His137 and Thr138 each coordinate substrate. The a divalent metal cation site is built by His167, His212, and His267. The substrate site is built by Lys275, Asn284, and Arg293.

This sequence belongs to the PdxA family. In terms of assembly, homodimer. Zn(2+) is required as a cofactor. Mg(2+) serves as cofactor. Requires Co(2+) as cofactor.

It localises to the cytoplasm. It catalyses the reaction 4-(phosphooxy)-L-threonine + NAD(+) = 3-amino-2-oxopropyl phosphate + CO2 + NADH. It participates in cofactor biosynthesis; pyridoxine 5'-phosphate biosynthesis; pyridoxine 5'-phosphate from D-erythrose 4-phosphate: step 4/5. Functionally, catalyzes the NAD(P)-dependent oxidation of 4-(phosphooxy)-L-threonine (HTP) into 2-amino-3-oxo-4-(phosphooxy)butyric acid which spontaneously decarboxylates to form 3-amino-2-oxopropyl phosphate (AHAP). The polypeptide is 4-hydroxythreonine-4-phosphate dehydrogenase (Ectopseudomonas mendocina (strain ymp) (Pseudomonas mendocina)).